The sequence spans 481 residues: Anti-sigma-I factor RsgI5 (481 aa).

Residues 1 to 50 lie on the Cytoplasmic side of the membrane; that stretch reads MKHKGIVLKLTKSKAIISTNDFQCYYIKRSPTIYVGKEVEFTNKDIVTKK. The region spanning 3-50 is the RsgI N-terminal anti-sigma domain; it reads HKGIVLKLTKSKAIISTNDFQCYYIKRSPTIYVGKEVEFTNKDIVTKK. A helical transmembrane segment spans residues 51–71; that stretch reads SVLIKPALSVACFILLIACVL. At 72–481 the chain is on the extracellular side; it reads SLSKIINNIS…DATFIGIKVD (410 aa). Residues 255–339 form a disordered region; the sequence is ASEERNPEES…TPTPTPTPAD (85 aa). Residues 256–265 show a composition bias toward basic and acidic residues; sequence SEERNPEESP. Composition is skewed to low complexity over residues 266–283 and 291–315; these read KMTPTPTPTHTATHTPTD and NTPTSTPAAKPSPKTASNSASTSTP. The segment covering 316 to 336 has biased composition (pro residues); that stretch reads APKPTSTPTPTLMPTPTPTPT.

In terms of assembly, interacts (via RsgI N-terminal anti-sigma domain) with SigI5.

Its subcellular location is the cell membrane. In terms of biological role, anti-sigma factor for SigI5. Negatively regulates SigI5 activity through direct interaction. Binding of the polysaccharide substrate to the extracellular C-terminal sensing domain of RsgI5 may induce a conformational change in its N-terminal cytoplasmic region, leading to the release and activation of SigI5. The protein is Anti-sigma-I factor RsgI5 of Acetivibrio thermocellus (strain ATCC 27405 / DSM 1237 / JCM 9322 / NBRC 103400 / NCIMB 10682 / NRRL B-4536 / VPI 7372) (Clostridium thermocellum).